Reading from the N-terminus, the 277-residue chain is MNSLDLHLDYGIVEDILKTFLLNEIRKFGFRSVVLGLSGGIDSAVVCELASRALGSDQVLALMMPYRSSSTDSIVHAQLLVEKLGIRAETCSITAAVDAFFEGVPEEDRLRRGNIMARTRMVYLYDVSARQNSLVVGTSNKTELLLGYGTLFGDMASAVNPVGDLYKTQIRGLARHLGIPEQLITKTPSADLWEGQSDEADLGFSYDEVDHLLFMMLEKRMDKAAIIEQGVSEIFYDRVRKMVVRNQYKRMMPVIAKISSRTPGIDFRYARDWQEVK.

36–43 (GLSGGIDS) serves as a coordination point for ATP. Residue Asp42 participates in Mg(2+) binding. Arg118 is a deamido-NAD(+) binding site. Thr138 serves as a coordination point for ATP. Glu143 contributes to the Mg(2+) binding site. Positions 167 and 189 each coordinate ATP.

Belongs to the NAD synthetase family. In terms of assembly, homodimer.

It carries out the reaction deamido-NAD(+) + NH4(+) + ATP = AMP + diphosphate + NAD(+) + H(+). Its pathway is cofactor biosynthesis; NAD(+) biosynthesis; NAD(+) from deamido-NAD(+) (ammonia route): step 1/1. Catalyzes the ATP-dependent amidation of deamido-NAD to form NAD. Uses ammonia as a nitrogen source. The polypeptide is NH(3)-dependent NAD(+) synthetase (Chlorobium phaeobacteroides (strain DSM 266 / SMG 266 / 2430)).